The following is a 176-amino-acid chain: Inorganic pyrophosphatase (176 aa).

Residues lysine 31, arginine 45, and tyrosine 57 each coordinate substrate. 3 residues coordinate Mg(2+): aspartate 67, aspartate 72, and aspartate 104. Tyrosine 141 provides a ligand contact to substrate.

Belongs to the PPase family. In terms of assembly, homohexamer. The cofactor is Mg(2+).

It is found in the cytoplasm. The enzyme catalyses diphosphate + H2O = 2 phosphate + H(+). Functionally, catalyzes the hydrolysis of inorganic pyrophosphate (PPi) forming two phosphate ions. The protein is Inorganic pyrophosphatase of Methanopyrus kandleri (strain AV19 / DSM 6324 / JCM 9639 / NBRC 100938).